The chain runs to 97 residues: Glutamyl-tRNA(Gln) amidotransferase subunit C 2 (97 aa).

It belongs to the GatC family. Heterotrimer of A, B and C subunits.

The catalysed reaction is L-glutamyl-tRNA(Gln) + L-glutamine + ATP + H2O = L-glutaminyl-tRNA(Gln) + L-glutamate + ADP + phosphate + H(+). It carries out the reaction L-aspartyl-tRNA(Asn) + L-glutamine + ATP + H2O = L-asparaginyl-tRNA(Asn) + L-glutamate + ADP + phosphate + 2 H(+). Functionally, allows the formation of correctly charged Asn-tRNA(Asn) or Gln-tRNA(Gln) through the transamidation of misacylated Asp-tRNA(Asn) or Glu-tRNA(Gln) in organisms which lack either or both of asparaginyl-tRNA or glutaminyl-tRNA synthetases. The reaction takes place in the presence of glutamine and ATP through an activated phospho-Asp-tRNA(Asn) or phospho-Glu-tRNA(Gln). In Clostridium acetobutylicum (strain ATCC 824 / DSM 792 / JCM 1419 / IAM 19013 / LMG 5710 / NBRC 13948 / NRRL B-527 / VKM B-1787 / 2291 / W), this protein is Glutamyl-tRNA(Gln) amidotransferase subunit C 2 (gatC2).